Consider the following 232-residue polypeptide: U-scoloptoxin(11)-Ssd2a (232 aa).

The signal sequence occupies residues 1–21 (MFQFCLLILLLAPGRFFSALG). The propeptide occupies 22-32 (KPQETLTVENR).

Contains 8 disulfide bonds. Expressed by the venom gland.

It is found in the secreted. This chain is U-scoloptoxin(11)-Ssd2a, found in Scolopendra dehaani (Thai centipede).